The primary structure comprises 308 residues: 4-hydroxy-tetrahydrodipicolinate synthase (308 aa).

Position 56 (Thr56) interacts with pyruvate. Catalysis depends on Tyr144, which acts as the Proton donor/acceptor. Lys172 serves as the catalytic Schiff-base intermediate with substrate. Val212 contributes to the pyruvate binding site.

The protein belongs to the DapA family. As to quaternary structure, homotetramer; dimer of dimers.

The protein resides in the cytoplasm. It catalyses the reaction L-aspartate 4-semialdehyde + pyruvate = (2S,4S)-4-hydroxy-2,3,4,5-tetrahydrodipicolinate + H2O + H(+). Its pathway is amino-acid biosynthesis; L-lysine biosynthesis via DAP pathway; (S)-tetrahydrodipicolinate from L-aspartate: step 3/4. Functionally, catalyzes the condensation of (S)-aspartate-beta-semialdehyde [(S)-ASA] and pyruvate to 4-hydroxy-tetrahydrodipicolinate (HTPA). The polypeptide is 4-hydroxy-tetrahydrodipicolinate synthase (Kineococcus radiotolerans (strain ATCC BAA-149 / DSM 14245 / SRS30216)).